Reading from the N-terminus, the 615-residue chain is Delta(14)-sterol reductase LBR (615 aa).

The 62-residue stretch at methionine 1–glutamine 62 folds into the Tudor domain. At methionine 1–glycine 211 the chain is on the nuclear side. Residues asparagine 52 to alanine 109 form a disordered region. Position 55 is an N6-acetyllysine (lysine 55). Threonine 58 is modified (phosphothreonine). Serine 59 and serine 67 each carry phosphoserine. Serine 71 and serine 86 each carry phosphoserine; by CDK1. Basic residues predominate over residues serine 73 to serine 86. Serine 97 and serine 99 each carry phosphoserine. Residue threonine 118 is modified to Phosphothreonine. The residue at position 128 (serine 128) is a Phosphoserine. Threonine 200 bears the Phosphothreonine mark. Helical transmembrane passes span valine 212–methionine 232, valine 258–glycine 278, phenylalanine 299–phenylalanine 319, phenylalanine 326–methionine 346, phenylalanine 386–alanine 406, isoleucine 447–isoleucine 467, glutamate 481–phenylalanine 501, and proline 561–valine 581. N6-acetyllysine occurs at positions 594 and 601.

This sequence belongs to the ERG4/ERG24 family. Interacts with CBX5. Interacts with DNA. Interaction with DNA is sequence independent with higher affinity for supercoiled and relaxed circular DNA than linear DNA. Interacts with lamin B. Interacts with CLNK. Interacts with TMEM147; promoting LBR localization to the nucleus inner membrane. Phosphorylated by CDK1 in mitosis when the inner nuclear membrane breaks down into vesicles that dissociate from the lamina and the chromatin. It is phosphorylated by different protein kinases in interphase when the membrane is associated with these structures. Phosphorylation of LBR and HP1 proteins may be responsible for some of the alterations in chromatin organization and nuclear structure which occur at various times during the cell cycle. Phosphorylated by SRPK1. In late anaphase LBR is dephosphorylated, probably by PP1 and/or PP2A, allowing reassociation with chromatin. Expressed in the bone marrow, liver, heart, adrenal gland, lung, placenta and uterus. Expressed in osteoclasts and osteoblast-like cells.

The protein localises to the nucleus inner membrane. Its subcellular location is the endoplasmic reticulum membrane. It localises to the cytoplasm. It is found in the nucleus. The catalysed reaction is 5alpha-cholest-8,14-dien-3beta-ol + NADPH + H(+) = 5alpha-cholest-8-en-3beta-ol + NADP(+). It carries out the reaction 4,4-dimethyl-5alpha-cholesta-8,24-dien-3beta-ol + NADP(+) = 4,4-dimethyl-5alpha-cholesta-8,14,24-trien-3beta-ol + NADPH + H(+). The enzyme catalyses 4,4-dimethyl-8,14-cholestadien-3beta-ol + NADPH + H(+) = 4,4-dimethyl-5alpha-cholest-8-en-3beta-ol + NADP(+). It functions in the pathway steroid biosynthesis; cholesterol biosynthesis. In terms of biological role, catalyzes the reduction of the C14-unsaturated bond of lanosterol, as part of the metabolic pathway leading to cholesterol biosynthesis. Plays a critical role in myeloid cell cholesterol biosynthesis which is essential to both myeloid cell growth and functional maturation. Mediates the activation of NADPH oxidases, perhaps by maintaining critical levels of cholesterol required for membrane lipid raft formation during neutrophil differentiation. Anchors the lamina and the heterochromatin to the inner nuclear membrane. The protein is Delta(14)-sterol reductase LBR (LBR) of Homo sapiens (Human).